Consider the following 322-residue polypeptide: Large ribosomal subunit protein uL15m (322 aa).

A mitochondrion-targeting transit peptide spans 1-57; that stretch reads MKAERQTGLRNSFTTVIGRKLINTFVPSMMLTSVAGNDIFFRGLFKSPVLAFQSYRY. The tract at residues 69–99 is disordered; sequence GSTKSFKRLGRGPSSGLGKTSGRGQKGQKAR. A compositionally biased stretch (gly residues) spans 81 to 93; it reads PSSGLGKTSGRGQ.

It belongs to the universal ribosomal protein uL15 family. In terms of assembly, component of the mitochondrial large ribosomal subunit (mt-LSU). Mature yeast 74S mitochondrial ribosomes consist of a small (37S) and a large (54S) subunit. The 37S small subunit contains a 15S ribosomal RNA (15S mt-rRNA) and 34 different proteins. The 54S large subunit contains a 21S rRNA (21S mt-rRNA) and 46 different proteins.

The protein localises to the mitochondrion. Component of the mitochondrial ribosome (mitoribosome), a dedicated translation machinery responsible for the synthesis of mitochondrial genome-encoded proteins, including at least some of the essential transmembrane subunits of the mitochondrial respiratory chain. The mitoribosomes are attached to the mitochondrial inner membrane and translation products are cotranslationally integrated into the membrane. This is Large ribosomal subunit protein uL15m (MRPL10) from Saccharomyces cerevisiae (strain ATCC 204508 / S288c) (Baker's yeast).